Reading from the N-terminus, the 224-residue chain is uncharacterized protein (224 aa).

The stretch at 108 to 137 (QLALDRAELNESIRATNENLALQYSKLQTE) forms a coiled coil.

This is an uncharacterized protein from Human picobirnavirus (strain Human/Thailand/Hy005102/-) (PBV).